The chain runs to 124 residues: Fluoride-specific ion channel FluC 1 (124 aa).

The next 4 helical transmembrane spans lie at 7-27, 32-52, 58-78, and 93-113; these read IQSKQLYKIFLLIVGSILGAI, LNNYFWVNISGAALLGLIVGL, IQFFLVIGFCGSFTTFSGWIL, and AGLICSNLLGGFTALSVTFWI. Residues Gly68 and Thr71 each coordinate Na(+).

Belongs to the fluoride channel Fluc/FEX (TC 1.A.43) family.

It is found in the cell inner membrane. The catalysed reaction is fluoride(in) = fluoride(out). Na(+) is not transported, but it plays an essential structural role and its presence is essential for fluoride channel function. Functionally, fluoride-specific ion channel. Important for reducing fluoride concentration in the cell, thus reducing its toxicity. In Prochlorococcus marinus (strain SARG / CCMP1375 / SS120), this protein is Fluoride-specific ion channel FluC 1.